Here is a 503-residue protein sequence, read N- to C-terminus: Cytochrome P450 7A1 (503 aa).

A helical transmembrane segment spans residues 4 to 24 (ISLIWGIAVLVSCCIWFIVGI). C444 provides a ligand contact to heme.

The protein belongs to the cytochrome P450 family. Heme is required as a cofactor. In terms of tissue distribution, detected in liver (at protein level). Liver.

It localises to the endoplasmic reticulum membrane. The protein localises to the microsome membrane. The enzyme catalyses cholesterol + reduced [NADPH--hemoprotein reductase] + O2 = 7alpha-hydroxycholesterol + oxidized [NADPH--hemoprotein reductase] + H2O + H(+). It catalyses the reaction 4beta-hydroxycholesterol + reduced [NADPH--hemoprotein reductase] + O2 = 4beta,7alpha-dihydroxycholesterol + oxidized [NADPH--hemoprotein reductase] + H2O + H(+). The catalysed reaction is lathosterol + reduced [NADPH--hemoprotein reductase] + O2 = 7alpha,8alpha-epoxy-5alpha-cholestan-3beta-ol + oxidized [NADPH--hemoprotein reductase] + H2O + H(+). It carries out the reaction lathosterol + reduced [NADPH--hemoprotein reductase] + O2 = 5alpha-cholestan-7-oxo-3beta-ol + oxidized [NADPH--hemoprotein reductase] + H2O + H(+). The enzyme catalyses 7-dehydrocholesterol + reduced [NADPH--hemoprotein reductase] + O2 = 7-oxocholesterol + oxidized [NADPH--hemoprotein reductase] + H2O + H(+). It catalyses the reaction (24S)-hydroxycholesterol + reduced [NADPH--hemoprotein reductase] + O2 = (24S)-7alpha-dihydroxycholesterol + oxidized [NADPH--hemoprotein reductase] + H2O + H(+). The catalysed reaction is (24R)-hydroxycholesterol + reduced [NADPH--hemoprotein reductase] + O2 = (24R)-7alpha-dihydroxycholesterol + oxidized [NADPH--hemoprotein reductase] + H2O + H(+). Its pathway is lipid metabolism; bile acid biosynthesis. It functions in the pathway steroid metabolism; cholesterol degradation. A cytochrome P450 monooxygenase involved in the metabolism of endogenous cholesterol and its oxygenated derivatives (oxysterols). Mechanistically, uses molecular oxygen inserting one oxygen atom into a substrate, and reducing the second into a water molecule, with two electrons provided by NADPH via cytochrome P450 reductase (CPR; NADPH-ferrihemoprotein reductase). Functions as a critical regulatory enzyme of bile acid biosynthesis and cholesterol homeostasis. Catalyzes the hydroxylation of carbon hydrogen bond at 7-alpha position of cholesterol, a rate-limiting step in cholesterol catabolism and bile acid biosynthesis. 7-alpha hydroxylates several oxysterols, including 4beta-hydroxycholesterol and 24-hydroxycholesterol. Catalyzes the oxidation of the 7,8 double bond of 7-dehydrocholesterol and lathosterol with direct and predominant formation of the 7-keto derivatives. The protein is Cytochrome P450 7A1 (Cyp7a1) of Rattus norvegicus (Rat).